The sequence spans 634 residues: MTNSNLRTENHFDYVKITLASPDRVMEWGQRTLPNGQVVGEVTKPETINYRTLKPEMDGLFCEKIFGPSKDWECHCGKYKRVRHRGIVCERCGVEVTESRVRRHRMGFIKLAAPVSHVWYLKGIPSYVAILLDMPLRDVEQIVYFNCYVVLDPGDHKDLKYKQLLTEDEWLEIEDEIYAEDSEIENEPVVGIGAEALKQLLEDLTLDEVAEQLREEINGSKGQKRAKLIKRLRVIDNFIATNARPEWMVLDVIPVIPPDLRPMVQLDGGRFATSDLNDLYRRVINRNNRLARLQEILAPEIIVRNEKRMLQEAVDALIDNGRRGRTVVGANNRPLKSLSDIIEGKQGRFRQNLLGKRVDYSGRSVIVVGPKLKMHQCGLPKEMAIELFQPFVIHRLIRQNIVNNIKAAKKLIQRADDEVMQVLQEVIEGHPILLNRAPTLHRLGIQAFEPKLVDGRAIQLHPLVCPAFNADFDGDQMAVHVPLAIEAQTEARMLMLASNNILSPATGEPIITPSQDMVLGSYYLTALQPGASKPDFGDRSCTFAGLEDVIHAFEDNRIGLHDWVWVRFNGEVQDDEELDAPSKSESLSDGTRIEEWSYRRDRFDEDGALISRYILTTVGRVVMNHTIIDAVAAA.

Positions 74, 76, 89, and 92 each coordinate Zn(2+). Residues aspartate 471, aspartate 473, and aspartate 475 each coordinate Mg(2+).

This sequence belongs to the RNA polymerase beta' chain family. RpoC1 subfamily. As to quaternary structure, in cyanobacteria the RNAP catalytic core is composed of 2 alpha, 1 beta, 1 beta', 1 gamma and 1 omega subunit. When a sigma factor is associated with the core the holoenzyme is formed, which can initiate transcription. Mg(2+) is required as a cofactor. It depends on Zn(2+) as a cofactor.

It catalyses the reaction RNA(n) + a ribonucleoside 5'-triphosphate = RNA(n+1) + diphosphate. Functionally, DNA-dependent RNA polymerase catalyzes the transcription of DNA into RNA using the four ribonucleoside triphosphates as substrates. This chain is DNA-directed RNA polymerase subunit gamma, found in Synechococcus sp. (strain CC9605).